The primary structure comprises 164 residues: PTS system sorbose-specific EIIB component (164 aa).

One can recognise a PTS EIIB type-4 domain in the interval 1–164 (MIITLARVDD…AKIDEVFGKE (164 aa)). The active-site Pros-phosphohistidine intermediate is the His14. Phosphohistidine; by EIIA is present on His14.

Its subcellular location is the cytoplasm. It carries out the reaction keto-L-sorbose(out) + N(pros)-phospho-L-histidyl-[protein] = L-sorbose 1-phosphate(in) + L-histidyl-[protein]. In terms of biological role, the phosphoenolpyruvate-dependent sugar phosphotransferase system (PTS), a major carbohydrate active transport system, catalyzes the phosphorylation of incoming sugar substrates concomitant with their translocation across the cell membrane. The enzyme II SorABCD PTS system is involved in L-sorbose transport. The sequence is that of PTS system sorbose-specific EIIB component from Lacticaseibacillus casei (Lactobacillus casei).